A 554-amino-acid polypeptide reads, in one-letter code: (Z)-gamma-bisabolene synthase 1 (554 aa).

D306, D310, D450, and D458 together coordinate Mg(2+). Residues 306–310 (DDACD) carry the DDXXD motif motif.

Belongs to the terpene synthase family. Tpsa subfamily. It depends on Mg(2+) as a cofactor. Requires Mn(2+) as cofactor. As to expression, predominantly expressed in roots. Expressed in the cortex and the sub-epidermal layers of roots. Also detected in leaf hydathodes and flower stigmata.

It localises to the cytoplasm. It catalyses the reaction (2E,6E)-farnesyl diphosphate = (Z)-gamma-bisabolene + diphosphate. It functions in the pathway secondary metabolite biosynthesis; terpenoid biosynthesis. Functionally, involved in sesquiterpene (C15) biosynthesis. The major product is (Z)-gamma-bisabolene with minor amounts of (E)-nerolidol and alpha-bisabolol. The polypeptide is (Z)-gamma-bisabolene synthase 1 (TPS12) (Arabidopsis thaliana (Mouse-ear cress)).